Consider the following 115-residue polypeptide: Ribosome-binding factor A (115 aa).

The protein belongs to the RbfA family. As to quaternary structure, monomer. Binds 30S ribosomal subunits, but not 50S ribosomal subunits or 70S ribosomes.

The protein resides in the cytoplasm. Its function is as follows. One of several proteins that assist in the late maturation steps of the functional core of the 30S ribosomal subunit. Associates with free 30S ribosomal subunits (but not with 30S subunits that are part of 70S ribosomes or polysomes). Required for efficient processing of 16S rRNA. May interact with the 5'-terminal helix region of 16S rRNA. This chain is Ribosome-binding factor A, found in Streptococcus gordonii (strain Challis / ATCC 35105 / BCRC 15272 / CH1 / DL1 / V288).